The chain runs to 22 residues: thr operon leader peptide (22 aa).

A disordered region spans residues 1-22; that stretch reads MRNISLTTTIITTTDTTGNGAG. A compositionally biased stretch (low complexity) spans 7–22; the sequence is TTTIITTTDTTGNGAG.

It belongs to the thr operon leader peptide family.

Its function is as follows. This protein is involved in control of the biosynthesis of threonine. The polypeptide is thr operon leader peptide (Serratia marcescens).